The sequence spans 545 residues: E3 ubiquitin-protein ligase ipaH9.8 (545 aa).

The tract at residues 1–242 (MLPINNNFSL…YHGPRIYFSM (242 aa)) is interaction with target proteins. LRR repeat units lie at residues 57–77 (NSDE…NLPA), 78–99 (QITL…PVTL), 100–117 (KKLY…VLPP), 118–139 (ALES…PDSL), 140–157 (LTMN…SLPL), 158–179 (ALKN…SEGN), 182–203 (VVRE…ILNL), and 205–228 (NECS…QRLT). Residues 243 to 250 (SDGQQNTL) are linker. The E3 ubiquitin-protein ligase catalytic domain stretch occupies residues 251 to 545 (HRPLADAVTA…SENGSQLHHS (295 aa)). Residues 253-545 (PLADAVTAWF…SENGSQLHHS (293 aa)) form the NEL domain. Cys-337 functions as the Glycyl thioester intermediate in the catalytic mechanism.

The protein belongs to the LRR-containing bacterial E3 ligase family. As to quaternary structure, also interacts with human and mouse U2AF1 (U2AF35). Post-translationally, ubiquitinated in the presence of host E1 ubiquitin-activating enzyme, E2 ubiquitin-conjugating enzyme and ubiquitin.

It localises to the secreted. The protein resides in the host cytoplasm. It is found in the host nucleus. It catalyses the reaction S-ubiquitinyl-[E2 ubiquitin-conjugating enzyme]-L-cysteine + [acceptor protein]-L-lysine = [E2 ubiquitin-conjugating enzyme]-L-cysteine + N(6)-ubiquitinyl-[acceptor protein]-L-lysine.. Its activity is regulated as follows. Exists in an autoinhibited state in the absence of substrate protein, due to interactions of the leucine-rich repeats with NEL domain. Is activated upon binding to a substrate protein. Functionally, effector E3 ubiquitin ligase that interferes with host's ubiquitination pathway and modulates the acute inflammatory responses, thus facilitating bacterial colonization within the host cell. Interacts with IKBKG (NEMO) and TNIP1 (ABIN-1), a ubiquitin-binding adapter protein, which results in TNIP1-dependent 'Lys-27'-linked polyubiquitination of IKBKG. Consequently, polyubiquitinated IKBKG undergoes proteasome-dependent degradation, which perturbs NF-kappa-B activation during bacterial infection. Mediates polyubiquitination of host U2AF1, leading to its proteasomal degradation. Catalyzes 'Lys-48'-linked polyubiquitination and subsequent degradation of a subset of host guanylate-binding proteins (GBP1, GBP2, GBP4 and GBP6), thereby suppressing host cell defense. In contrast, host GBP3 and GBP7 are not ubiquitinated by IpaH9.8. Uses UBE2D2 (UBCH5B) as an E2 ubiquitin-conjugating enzyme. In Shigella boydii serotype 4 (strain Sb227), this protein is E3 ubiquitin-protein ligase ipaH9.8 (ipaH9.8).